The chain runs to 575 residues: Epsin-1 (575 aa).

Lys11, Arg25, Asn30, Arg63, and His73 together coordinate a 1,2-diacyl-sn-glycero-3-phospho-(1D-myo-inositol-4,5-bisphosphate). Positions 12–144 (NIVHNYSEAE…RDEDRLREER (133 aa)) constitute an ENTH domain. Residues 150 to 186 (TKEKLAQTATASSAAVGSGPPPEAEQAWPQSSGEEEL) are disordered. Residues 157 to 167 (TATASSAAVGS) show a composition bias toward low complexity. UIM domains lie at 183–202 (EEELQLQLALAMSKEEADQP), 208–227 (EDDVQLQLALSLSREEHDKE), and 233–252 (GDDLRLQMAIEESKRETGGK). The segment at 264–575 (FTTPAPPQAS…PAPNTNPFLL (312 aa)) is disordered. 8 tandem repeats follow at residues 274–276 (DPW), 294–296 (DPW), 306–308 (DPW), 319–321 (DPW), 332–334 (DPW), 349–351 (DPW), 367–369 (DPW), and 377–379 (DPW). Residues 274–379 (DPWGGPASVP…APAPAFSDPW (106 aa)) are 8 X 3 AA repeats of D-P-W. Composition is skewed to low complexity over residues 279–299 (PASVPTAVPVAAAASDPWGGP) and 306–316 (DPWGGAAPTPA). The segment covering 332-346 (DPWGGTPAPAAGEGP) has biased composition (low complexity). Low complexity predominate over residues 367–379 (DPWAPAPAFSDPW). Ser382 bears the Phosphoserine mark. Residues 401 to 410 (DEFSDFDRLR) carry the [DE]-X(1,2)-F-X-X-[FL]-X-X-X-R motif motif. Phosphoserine occurs at positions 418 and 419. Residue Thr420 is modified to Phosphothreonine. Phosphoserine occurs at positions 434, 446, and 453. Positions 453 to 467 (SPPPAATPTPTPPTR) are enriched in pro residues. A phosphothreonine mark is found at Thr459, Thr463, and Thr469. Ser472 is subject to Phosphoserine. Residue Thr493 is modified to Phosphothreonine. Repeat copies occupy residues 501–503 (NPF) and 517–519 (NPF). The segment at 501–573 (NPFLPSGAPP…GPPAPNTNPF (73 aa)) is 3 X 3 AA repeats of N-P-F. Position 533 is an omega-N-methylarginine (Arg533). Residues 556–569 (GLPPMMPPGPPAPN) show a composition bias toward pro residues. Repeat unit 3 spans residues 571–573 (NPF).

Belongs to the epsin family. In terms of assembly, monomer. Binds clathrin and ZBTB16/ZNF145. Binds ubiquitinated proteins. Interacts with RALBP1 in a complex also containing NUMB and TFAP2A during interphase and mitosis. Interacts with AP2B1. Interacts with UBQLN2. Interacts with ITSN1. Interacts with AP2A1 and AP2A2. Interacts with REPS2; the interaction is direct. Interacts with EPS15; the interaction is direct. Interacts with ENTREP1. Phosphorylated on serine and/or threonine residues in mitotic cells. Phosphorylation reduces interaction with REPS2, AP-2 and the membrane fraction. Depolarization of synaptosomes results in dephosphorylation. In terms of processing, ubiquitinated.

The protein localises to the cytoplasm. Its subcellular location is the cell membrane. It localises to the nucleus. It is found in the membrane. The protein resides in the clathrin-coated pit. Functionally, binds to membranes enriched in phosphatidylinositol 4,5-bisphosphate (PtdIns(4,5)P2). Modifies membrane curvature and facilitates the formation of clathrin-coated invaginations. Regulates receptor-mediated endocytosis. The chain is Epsin-1 (Epn1) from Mus musculus (Mouse).